The chain runs to 576 residues: 5'-nucleotidase (576 aa).

An N-terminal signal peptide occupies residues 1 to 28; sequence MRPAAATAPKWLLLALSALLPLWPTAKS. Asp-38 and His-40 together coordinate Zn(2+). Cysteines 53 and 59 form a disulfide. Asn-55 carries an N-linked (GlcNAc...) asparagine glycan. Residues Asp-87, Asn-119, His-222, and His-245 each contribute to the Zn(2+) site. Residues Asn-313, Asn-335, and Asn-349 are each glycosylated (N-linked (GlcNAc...) asparagine). Disulfide bonds link Cys-355-Cys-360 and Cys-367-Cys-389. Arg-356 provides a ligand contact to AMP. Arg-356 is a binding site for IMP. Asn-392 and Arg-397 together coordinate AMP. IMP is bound by residues Asn-392 and Arg-397. An N-linked (GlcNAc...) asparagine glycan is attached at Asn-405. Phe-419 contributes to the AMP binding site. Phe-419 serves as a coordination point for IMP. Cysteines 478 and 481 form a disulfide. Positions 502 and 508 each coordinate AMP. The IMP site is built by Tyr-502 and Asp-508. Ser-551 carries the GPI-anchor amidated serine lipid modification. The propeptide at 552-576 is removed in mature form; the sequence is AASHYQGSFPLIILSFWAVILVLYQ.

It belongs to the 5'-nucleotidase family. As to quaternary structure, homodimer. The cofactor is Zn(2+). As to expression, expressed in the brain.

It localises to the cell membrane. The catalysed reaction is a ribonucleoside 5'-phosphate + H2O = a ribonucleoside + phosphate. It carries out the reaction a 2'-deoxyribonucleoside 5'-phosphate + H2O = a 2'-deoxyribonucleoside + phosphate. The enzyme catalyses dTMP + H2O = thymidine + phosphate. It catalyses the reaction CMP + H2O = cytidine + phosphate. The catalysed reaction is IMP + H2O = inosine + phosphate. It carries out the reaction AMP + H2O = adenosine + phosphate. The enzyme catalyses GMP + H2O = guanosine + phosphate. It catalyses the reaction UMP + H2O = uridine + phosphate. The catalysed reaction is dAMP + H2O = 2'-deoxyadenosine + phosphate. It carries out the reaction dCMP + H2O = 2'-deoxycytidine + phosphate. Functionally, catalyzes the hydrolysis of nucleotide monophosphates, releasing inorganic phosphate and the corresponding nucleoside. AMP is the preferred substrate but can also hydrolyze CMP and GMP. Shows a preference for ribonucleotide monophosphates over their equivalent deoxyribose forms. Other substrates include IMP, UMP, dAMP, dCMP, dTMP, NAD and NMN. This chain is 5'-nucleotidase (Nt5e), found in Rattus norvegicus (Rat).